The primary structure comprises 81 residues: Cytochrome b559 subunit alpha (81 aa).

Arg-18 and His-23 together coordinate heme. A helical membrane pass occupies residues 19 to 40 (YWVIHSITIPMLFIAGWLFVST).

This sequence belongs to the PsbE/PsbF family. Heterodimer of an alpha subunit and a beta subunit. PSII is composed of 1 copy each of membrane proteins PsbA, PsbB, PsbC, PsbD, PsbE, PsbF, PsbH, PsbI, PsbJ, PsbK, PsbL, PsbM, PsbT, PsbX, PsbY, PsbZ, Psb30/Ycf12, peripheral proteins PsbO, CyanoQ (PsbQ), PsbU, PsbV and a large number of cofactors. It forms dimeric complexes. The cofactor is heme b.

It is found in the cellular thylakoid membrane. In terms of biological role, this b-type cytochrome is tightly associated with the reaction center of photosystem II (PSII). PSII is a light-driven water:plastoquinone oxidoreductase that uses light energy to abstract electrons from H(2)O, generating O(2) and a proton gradient subsequently used for ATP formation. It consists of a core antenna complex that captures photons, and an electron transfer chain that converts photonic excitation into a charge separation. The sequence is that of Cytochrome b559 subunit alpha from Synechocystis sp. (strain ATCC 27184 / PCC 6803 / Kazusa).